Consider the following 940-residue polypeptide: Protein translocase subunit SecA 1 (940 aa).

ATP contacts are provided by residues Q83, 101-105 (GEGKT), and D490. The tract at residues 856–940 (AEQGGTATAA…AKPPKSVKRR (85 aa)) is disordered.

The protein belongs to the SecA family. Monomer and homodimer. Part of the essential Sec protein translocation apparatus which comprises SecA, SecYEG and auxiliary proteins SecDF. Other proteins may also be involved.

It localises to the cell membrane. Its subcellular location is the cytoplasm. It catalyses the reaction ATP + H2O + cellular proteinSide 1 = ADP + phosphate + cellular proteinSide 2.. Its function is as follows. Part of the Sec protein translocase complex. Interacts with the SecYEG preprotein conducting channel. Has a central role in coupling the hydrolysis of ATP to the transfer of proteins into and across the cell membrane, serving as an ATP-driven molecular motor driving the stepwise translocation of polypeptide chains across the membrane. In Mycolicibacterium paratuberculosis (strain ATCC BAA-968 / K-10) (Mycobacterium paratuberculosis), this protein is Protein translocase subunit SecA 1.